The following is a 388-amino-acid chain: 3-dehydroquinate synthase (388 aa).

The protein belongs to the archaeal-type DHQ synthase family.

It catalyses the reaction 2-amino-2,3,7-trideoxy-D-lyxo-hept-6-ulosonate + NAD(+) + H2O = 3-dehydroquinate + NH4(+) + NADH + H(+). In terms of biological role, catalyzes the oxidative deamination and cyclization of 2-amino-3,7-dideoxy-D-threo-hept-6-ulosonic acid (ADH) to yield 3-dehydroquinate (DHQ), which is fed into the canonical shikimic pathway of aromatic amino acid biosynthesis. In Natronomonas pharaonis (strain ATCC 35678 / DSM 2160 / CIP 103997 / JCM 8858 / NBRC 14720 / NCIMB 2260 / Gabara) (Halobacterium pharaonis), this protein is 3-dehydroquinate synthase.